The following is a 294-amino-acid chain: ATP synthase gamma chain (294 aa).

Belongs to the ATPase gamma chain family. In terms of assembly, F-type ATPases have 2 components, CF(1) - the catalytic core - and CF(0) - the membrane proton channel. CF(1) has five subunits: alpha(3), beta(3), gamma(1), delta(1), epsilon(1). CF(0) has three main subunits: a, b and c.

It localises to the cell inner membrane. In terms of biological role, produces ATP from ADP in the presence of a proton gradient across the membrane. The gamma chain is believed to be important in regulating ATPase activity and the flow of protons through the CF(0) complex. The polypeptide is ATP synthase gamma chain (Nitrosomonas europaea (strain ATCC 19718 / CIP 103999 / KCTC 2705 / NBRC 14298)).